A 249-amino-acid chain; its full sequence is MSIVMQLQDVAESTRLGPLSGEVRAGEILHLVGPNGAGKSTLLARMAGMTSGKGSIQFAGQPLEAWSATKLALHRAYLSQQQTPPFATPVWHYLTLHQHDKTRTELLNDVAGALALDDKLGRSTNQLSGGEWQRVRLAAVVLQITPQANPAGQLLLLDEPMNSLDVAQQSALDKILSALCQQGLAIVMSSHDLNHTLRHAHRAWLLKGGKMLASGRREEVLTPPNLAQAYGMNFRRLDIEGHRMLISTI.

The ABC transporter domain occupies 1–233; it reads MSIVMQLQDV…PNLAQAYGMN (233 aa). Residue 33–40 participates in ATP binding; it reads GPNGAGKS.

This sequence belongs to the ABC transporter superfamily. Vitamin B12 importer (TC 3.A.1.13.1) family. As to quaternary structure, the complex is composed of two ATP-binding proteins (BtuD), two transmembrane proteins (BtuC) and a solute-binding protein (BtuF).

It is found in the cell inner membrane. It catalyses the reaction an R-cob(III)alamin(out) + ATP + H2O = an R-cob(III)alamin(in) + ADP + phosphate + H(+). In terms of biological role, part of the ABC transporter complex BtuCDF involved in vitamin B12 import. Responsible for energy coupling to the transport system. The sequence is that of Vitamin B12 import ATP-binding protein BtuD from Escherichia coli (strain K12 / DH10B).